A 397-amino-acid chain; its full sequence is Protein RecA (397 aa).

The disordered stretch occupies residues 1-23 (MALETKPAKDPAAEDKHELDPKR). Residue 83–90 (GPESSGKT) participates in ATP binding.

The protein belongs to the RecA family.

The protein resides in the cytoplasm. Its function is as follows. Can catalyze the hydrolysis of ATP in the presence of single-stranded DNA, the ATP-dependent uptake of single-stranded DNA by duplex DNA, and the ATP-dependent hybridization of homologous single-stranded DNAs. It interacts with LexA causing its activation and leading to its autocatalytic cleavage. The chain is Protein RecA from Bifidobacterium longum (strain NCC 2705).